The primary structure comprises 49 residues: Large ribosomal subunit protein bL32 (49 aa).

It belongs to the bacterial ribosomal protein bL32 family.

The protein is Large ribosomal subunit protein bL32 of Helicobacter hepaticus (strain ATCC 51449 / 3B1).